The chain runs to 188 residues: Pyridoxal 5'-phosphate synthase subunit PdxT (188 aa).

46 to 48 (GES) contributes to the L-glutamine binding site. The active-site Nucleophile is the Cys-78. L-glutamine-binding positions include Arg-105 and 134-135 (IR). Catalysis depends on charge relay system residues His-170 and Glu-172.

Belongs to the glutaminase PdxT/SNO family. As to quaternary structure, in the presence of PdxS, forms a dodecamer of heterodimers. Only shows activity in the heterodimer.

The catalysed reaction is aldehydo-D-ribose 5-phosphate + D-glyceraldehyde 3-phosphate + L-glutamine = pyridoxal 5'-phosphate + L-glutamate + phosphate + 3 H2O + H(+). The enzyme catalyses L-glutamine + H2O = L-glutamate + NH4(+). Its pathway is cofactor biosynthesis; pyridoxal 5'-phosphate biosynthesis. Functionally, catalyzes the hydrolysis of glutamine to glutamate and ammonia as part of the biosynthesis of pyridoxal 5'-phosphate. The resulting ammonia molecule is channeled to the active site of PdxS. This is Pyridoxal 5'-phosphate synthase subunit PdxT from Thermotoga maritima (strain ATCC 43589 / DSM 3109 / JCM 10099 / NBRC 100826 / MSB8).